An 89-amino-acid chain; its full sequence is Small ribosomal subunit protein uS15 (89 aa).

Belongs to the universal ribosomal protein uS15 family. As to quaternary structure, part of the 30S ribosomal subunit. Forms a bridge to the 50S subunit in the 70S ribosome, contacting the 23S rRNA.

Functionally, one of the primary rRNA binding proteins, it binds directly to 16S rRNA where it helps nucleate assembly of the platform of the 30S subunit by binding and bridging several RNA helices of the 16S rRNA. Forms an intersubunit bridge (bridge B4) with the 23S rRNA of the 50S subunit in the ribosome. This chain is Small ribosomal subunit protein uS15, found in Brevibacillus brevis (strain 47 / JCM 6285 / NBRC 100599).